A 332-amino-acid chain; its full sequence is MSRILDNELMGDEELVERTLRPQYLQEYIGQDKVKDQLKIFIEAAKLRDEALDHTLLFGPPGLGKTTMAFVIANELGVNLKQTSGPVIEKSGDLVAILNDLEPGDVLFIDEIHRLPMAVEEVLYSAMEDFYIDIMIGSGETSRSVHLDLPPFTLIGATTRAGMLSNPLRARFGITGHMEYYEAGDLTEIVERTAEIFEMAITHEAAKELALRSRGTPRIANRLLKRVRDYAQIMGNGLIDDKITDQALSMLDVDQEGLDYVDQKILKTMIEVYGGGPVGLGTLSVNIAEERETVEDMYEPYLIQKGFVMRTRTGRVATRKAYEHLGYEYMKE.

Residues Met-1–Tyr-181 are large ATPase domain (RuvB-L). Residues Leu-20, Arg-21, Gly-62, Lys-65, Thr-66, Thr-67, Glu-128–Phe-130, Arg-171, Tyr-181, and Arg-218 each bind ATP. Thr-66 contacts Mg(2+). The small ATPAse domain (RuvB-S) stretch occupies residues Glu-182 to Asp-252. Residues Gln-255–Glu-332 are head domain (RuvB-H). Arg-291, Arg-310, Arg-312, and Arg-315 together coordinate DNA.

The protein belongs to the RuvB family. As to quaternary structure, homohexamer. Forms an RuvA(8)-RuvB(12)-Holliday junction (HJ) complex. HJ DNA is sandwiched between 2 RuvA tetramers; dsDNA enters through RuvA and exits via RuvB. An RuvB hexamer assembles on each DNA strand where it exits the tetramer. Each RuvB hexamer is contacted by two RuvA subunits (via domain III) on 2 adjacent RuvB subunits; this complex drives branch migration. In the full resolvosome a probable DNA-RuvA(4)-RuvB(12)-RuvC(2) complex forms which resolves the HJ.

It localises to the cytoplasm. The enzyme catalyses ATP + H2O = ADP + phosphate + H(+). Functionally, the RuvA-RuvB-RuvC complex processes Holliday junction (HJ) DNA during genetic recombination and DNA repair, while the RuvA-RuvB complex plays an important role in the rescue of blocked DNA replication forks via replication fork reversal (RFR). RuvA specifically binds to HJ cruciform DNA, conferring on it an open structure. The RuvB hexamer acts as an ATP-dependent pump, pulling dsDNA into and through the RuvAB complex. RuvB forms 2 homohexamers on either side of HJ DNA bound by 1 or 2 RuvA tetramers; 4 subunits per hexamer contact DNA at a time. Coordinated motions by a converter formed by DNA-disengaged RuvB subunits stimulates ATP hydrolysis and nucleotide exchange. Immobilization of the converter enables RuvB to convert the ATP-contained energy into a lever motion, pulling 2 nucleotides of DNA out of the RuvA tetramer per ATP hydrolyzed, thus driving DNA branch migration. The RuvB motors rotate together with the DNA substrate, which together with the progressing nucleotide cycle form the mechanistic basis for DNA recombination by continuous HJ branch migration. Branch migration allows RuvC to scan DNA until it finds its consensus sequence, where it cleaves and resolves cruciform DNA. In Streptococcus sanguinis (strain SK36), this protein is Holliday junction branch migration complex subunit RuvB.